We begin with the raw amino-acid sequence, 403 residues long: RILP-like protein 1 (403 aa).

A Phosphoserine modification is found at Ser-7. Residues 10–97 (AAESALEKNV…RLERMDRIEK (88 aa)) enclose the RH1 domain. Cys-47 bears the S-nitrosocysteine mark. Positions 76–258 (ELDELRLELD…KLRERLQGEH (183 aa)) form a coiled coil. Disordered stretches follow at residues 254–275 (LQGE…GEES), 327–352 (EMEE…PESG), and 384–403 (ANTH…LQHL). The residue at position 259 (Ser-259) is a Phosphoserine. Positions 262–275 (GEEEPETEPVGEES) are enriched in acidic residues. Residues 291-356 (RPRFTLQELR…PQPESGIKRL (66 aa)) enclose the RH2 domain. Residues 394–403 (EQGQEALQHL) are compositionally biased toward polar residues.

Belongs to the RILPL family. As to quaternary structure, interacts (when S-nitrosylated) with GAPDH. Interacts with RAB8A; interaction is dependent on the phosphorylation of 'Thr-72' of RAB8A. Interacts with RAB10 and RAB12; the interaction is dependent on the phosphorylation of 'Thr-73' of RAB10, and 'Ser-105' of RAB12. S-nitrosylation is required for the interaction with GAPDH. Widely expressed. Expressed at lower level in liver and kidney.

The protein localises to the cytoplasm. It is found in the cytosol. Its subcellular location is the cytoskeleton. The protein resides in the microtubule organizing center. It localises to the centrosome. The protein localises to the centriole. It is found in the cilium basal body. Functionally, plays a role in the regulation of cell shape and polarity. Plays a role in cellular protein transport, including protein transport away from primary cilia. Neuroprotective protein, which acts by sequestring GAPDH in the cytosol and prevent the apoptotic function of GAPDH in the nucleus. Competes with SIAH1 for binding GAPDH. Does not regulate lysosomal morphology and distribution. Binds to RAB10 following LRRK2-mediated RAB10 phosphorylation which leads to inhibition of ciliogenesis. This is RILP-like protein 1 (RILPL1) from Homo sapiens (Human).